The chain runs to 430 residues: Tol-Pal system protein TolB (430 aa).

Positions 1–21 (MKQALRVAFGFLMLWAAVLHA) are cleaved as a signal peptide.

The protein belongs to the TolB family. The Tol-Pal system is composed of five core proteins: the inner membrane proteins TolA, TolQ and TolR, the periplasmic protein TolB and the outer membrane protein Pal. They form a network linking the inner and outer membranes and the peptidoglycan layer.

It is found in the periplasm. Its function is as follows. Part of the Tol-Pal system, which plays a role in outer membrane invagination during cell division and is important for maintaining outer membrane integrity. TolB occupies a key intermediary position in the Tol-Pal system because it communicates directly with both membrane-embedded components, Pal in the outer membrane and TolA in the inner membrane. The sequence is that of Tol-Pal system protein TolB from Klebsiella pneumoniae (strain 342).